A 1003-amino-acid chain; its full sequence is Glycine--tRNA ligase (1003 aa).

The glycine--tRNA ligase alpha subunit stretch occupies residues 1–310 (MSSQPLTLQA…VTPKKIPTIC (310 aa)). Positions 311–1003 (QPEDFLLEIG…CFGFYAWDVL (693 aa)) are glycine--tRNA ligase beta subunit.

This sequence belongs to the class-II aminoacyl-tRNA synthetase family.

The protein localises to the cytoplasm. It catalyses the reaction tRNA(Gly) + glycine + ATP = glycyl-tRNA(Gly) + AMP + diphosphate. The chain is Glycine--tRNA ligase (glyQS) from Chlamydia trachomatis serovar L2 (strain ATCC VR-902B / DSM 19102 / 434/Bu).